Consider the following 325-residue polypeptide: UPF0285 protein MmarC6_0247 (325 aa).

The protein belongs to the UPF0285 family.

The polypeptide is UPF0285 protein MmarC6_0247 (Methanococcus maripaludis (strain C6 / ATCC BAA-1332)).